We begin with the raw amino-acid sequence, 84 residues long: Large ribosomal subunit protein bL27 (84 aa).

Positions Met1–Leu21 are disordered.

Belongs to the bacterial ribosomal protein bL27 family.

This chain is Large ribosomal subunit protein bL27, found in Chloroherpeton thalassium (strain ATCC 35110 / GB-78).